We begin with the raw amino-acid sequence, 367 residues long: Anhydro-N-acetylmuramic acid kinase (367 aa).

ATP is bound at residue 11 to 18; sequence GTSLDGVD.

It belongs to the anhydro-N-acetylmuramic acid kinase family.

It catalyses the reaction 1,6-anhydro-N-acetyl-beta-muramate + ATP + H2O = N-acetyl-D-muramate 6-phosphate + ADP + H(+). It functions in the pathway amino-sugar metabolism; 1,6-anhydro-N-acetylmuramate degradation. It participates in cell wall biogenesis; peptidoglycan recycling. In terms of biological role, catalyzes the specific phosphorylation of 1,6-anhydro-N-acetylmuramic acid (anhMurNAc) with the simultaneous cleavage of the 1,6-anhydro ring, generating MurNAc-6-P. Is required for the utilization of anhMurNAc either imported from the medium or derived from its own cell wall murein, and thus plays a role in cell wall recycling. This is Anhydro-N-acetylmuramic acid kinase from Bradyrhizobium diazoefficiens (strain JCM 10833 / BCRC 13528 / IAM 13628 / NBRC 14792 / USDA 110).